We begin with the raw amino-acid sequence, 373 residues long: UPF0725 protein At1g23950 (373 aa).

Thr-2 is modified (N-acetylthreonine).

The protein belongs to the UPF0725 (EMB2204) family.

The sequence is that of UPF0725 protein At1g23950 from Arabidopsis thaliana (Mouse-ear cress).